The chain runs to 207 residues: Outer-membrane lipoprotein LolB (207 aa).

A signal peptide spans 1–23; it reads MPTMNRSRRLALLCLGAPLLLAA. A lipid anchor (N-palmitoyl cysteine) is attached at C24. Residue C24 is the site of S-diacylglycerol cysteine attachment. Positions 171 to 207 are disordered; the sequence is PSASQAPAPRPRRIDLEREGGPTPLAVKLVIDPEEAP.

It belongs to the LolB family. Monomer.

It localises to the cell outer membrane. Its function is as follows. Plays a critical role in the incorporation of lipoproteins in the outer membrane after they are released by the LolA protein. The protein is Outer-membrane lipoprotein LolB of Cupriavidus pinatubonensis (strain JMP 134 / LMG 1197) (Cupriavidus necator (strain JMP 134)).